Reading from the N-terminus, the 272-residue chain is Thymidine phosphorylase (272 aa).

Belongs to the thymidine/pyrimidine-nucleoside phosphorylase family. In terms of assembly, homodimer.

It catalyses the reaction thymidine + phosphate = 2-deoxy-alpha-D-ribose 1-phosphate + thymine. The enzymes which catalyze the reversible phosphorolysis of pyrimidine nucleosides are involved in the degradation of these compounds and in their utilization as carbon and energy sources, or in the rescue of pyrimidine bases for nucleotide synthesis. The sequence is that of Thymidine phosphorylase (deoA) from Metamycoplasma hominis (Mycoplasma hominis).